The following is a 142-amino-acid chain: Nitrogen fixation protein NifU 2 (142 aa).

The segment at 1–36 is disordered; sequence MKDLFDESLTLDTGSAAPGTAPGRPRRRQPAGGKAP. A compositionally biased stretch (low complexity) spans 14–23; it reads GSAAPGTAPG.

It belongs to the NifU family.

Its function is as follows. May be involved in the formation or repair of [Fe-S] clusters present in iron-sulfur proteins. This chain is Nitrogen fixation protein NifU 2 (nifU2), found in Rhodobacter capsulatus (Rhodopseudomonas capsulata).